The primary structure comprises 110 residues: UPF0122 protein lin1916 (110 aa).

The protein belongs to the UPF0122 family.

Functionally, might take part in the signal recognition particle (SRP) pathway. This is inferred from the conservation of its genetic proximity to ftsY/ffh. May be a regulatory protein. The chain is UPF0122 protein lin1916 from Listeria innocua serovar 6a (strain ATCC BAA-680 / CLIP 11262).